The chain runs to 213 residues: Small ribosomal subunit protein uS3 (213 aa).

The KH type-2 domain occupies isoleucine 38–arginine 106.

Belongs to the universal ribosomal protein uS3 family. As to quaternary structure, part of the 30S ribosomal subunit. Forms a tight complex with proteins S10 and S14.

Binds the lower part of the 30S subunit head. Binds mRNA in the 70S ribosome, positioning it for translation. The polypeptide is Small ribosomal subunit protein uS3 (Maridesulfovibrio salexigens (strain ATCC 14822 / DSM 2638 / NCIMB 8403 / VKM B-1763) (Desulfovibrio salexigens)).